Here is a 469-residue protein sequence, read N- to C-terminus: UDP-N-acetylmuramate--L-alanine ligase (469 aa).

Residue 114–120 participates in ATP binding; it reads GTHGKTT.

Belongs to the MurCDEF family.

It localises to the cytoplasm. It carries out the reaction UDP-N-acetyl-alpha-D-muramate + L-alanine + ATP = UDP-N-acetyl-alpha-D-muramoyl-L-alanine + ADP + phosphate + H(+). It participates in cell wall biogenesis; peptidoglycan biosynthesis. Its function is as follows. Cell wall formation. This is UDP-N-acetylmuramate--L-alanine ligase from Sinorhizobium fredii (strain NBRC 101917 / NGR234).